We begin with the raw amino-acid sequence, 266 residues long: tRNA pseudouridine synthase A (266 aa).

D57 functions as the Nucleophile in the catalytic mechanism. Residue Y115 participates in substrate binding.

It belongs to the tRNA pseudouridine synthase TruA family. As to quaternary structure, homodimer.

The enzyme catalyses uridine(38/39/40) in tRNA = pseudouridine(38/39/40) in tRNA. Functionally, formation of pseudouridine at positions 38, 39 and 40 in the anticodon stem and loop of transfer RNAs. In Buchnera aphidicola subsp. Acyrthosiphon pisum (strain Tuc7), this protein is tRNA pseudouridine synthase A.